The primary structure comprises 280 residues: 4-diphosphocytidyl-2-C-methyl-D-erythritol kinase (280 aa).

Lysine 9 is a catalytic residue. 92 to 102 (PMGGGLGGGSS) is an ATP binding site. Residue aspartate 134 is part of the active site.

It belongs to the GHMP kinase family. IspE subfamily.

The enzyme catalyses 4-CDP-2-C-methyl-D-erythritol + ATP = 4-CDP-2-C-methyl-D-erythritol 2-phosphate + ADP + H(+). The protein operates within isoprenoid biosynthesis; isopentenyl diphosphate biosynthesis via DXP pathway; isopentenyl diphosphate from 1-deoxy-D-xylulose 5-phosphate: step 3/6. Functionally, catalyzes the phosphorylation of the position 2 hydroxy group of 4-diphosphocytidyl-2C-methyl-D-erythritol. In Nitrosococcus oceani (strain ATCC 19707 / BCRC 17464 / JCM 30415 / NCIMB 11848 / C-107), this protein is 4-diphosphocytidyl-2-C-methyl-D-erythritol kinase.